The chain runs to 430 residues: Histidinol dehydrogenase (430 aa).

Residues Y129, Q190, and N213 each coordinate NAD(+). Residues S236, Q258, and H261 each contribute to the substrate site. Zn(2+)-binding residues include Q258 and H261. Active-site proton acceptor residues include E326 and H327. Residues H327, D360, E414, and H419 each contribute to the substrate site. Zn(2+) is bound at residue D360. Residue H419 participates in Zn(2+) binding.

Belongs to the histidinol dehydrogenase family. Zn(2+) is required as a cofactor.

It catalyses the reaction L-histidinol + 2 NAD(+) + H2O = L-histidine + 2 NADH + 3 H(+). Its pathway is amino-acid biosynthesis; L-histidine biosynthesis; L-histidine from 5-phospho-alpha-D-ribose 1-diphosphate: step 9/9. In terms of biological role, catalyzes the sequential NAD-dependent oxidations of L-histidinol to L-histidinaldehyde and then to L-histidine. The sequence is that of Histidinol dehydrogenase from Caldanaerobacter subterraneus subsp. tengcongensis (strain DSM 15242 / JCM 11007 / NBRC 100824 / MB4) (Thermoanaerobacter tengcongensis).